The following is a 197-amino-acid chain: MFSPLIDQLINSLRHLPGVGPKSAQRMALHLLERDREGAQNLSEVLAKAVEHVHRCQQCRTLTEQALCNICSNARRNRKELCIVETPADVIAIETSAVFSGYYFVLLGRLSPIDGIGPKEIGMDVLASRFAEGEIEEVIIATNPTIEGEATAHYISERAKAQGIKVSRIAHGIPIGGELEYVDGGTLAHAISRRQEI.

A C4-type zinc finger spans residues C56 to C71. In terms of domain architecture, Toprim spans K79–P174.

The protein belongs to the RecR family.

Its function is as follows. May play a role in DNA repair. It seems to be involved in an RecBC-independent recombinational process of DNA repair. It may act with RecF and RecO. The protein is Recombination protein RecR of Saccharophagus degradans (strain 2-40 / ATCC 43961 / DSM 17024).